A 176-amino-acid chain; its full sequence is Protein MOTHER of FT and TFL1 homolog 1 (176 aa).

Belongs to the phosphatidylethanolamine-binding protein family.

May form complexes with phosphorylated ligands by interfering with kinases and their effectors. The protein is Protein MOTHER of FT and TFL1 homolog 1 of Oryza sativa subsp. japonica (Rice).